We begin with the raw amino-acid sequence, 373 residues long: Aminomethyltransferase (373 aa).

The protein belongs to the GcvT family. As to quaternary structure, the glycine cleavage system is composed of four proteins: P, T, L and H.

It carries out the reaction N(6)-[(R)-S(8)-aminomethyldihydrolipoyl]-L-lysyl-[protein] + (6S)-5,6,7,8-tetrahydrofolate = N(6)-[(R)-dihydrolipoyl]-L-lysyl-[protein] + (6R)-5,10-methylene-5,6,7,8-tetrahydrofolate + NH4(+). The glycine cleavage system catalyzes the degradation of glycine. The sequence is that of Aminomethyltransferase from Prochlorococcus marinus (strain SARG / CCMP1375 / SS120).